Consider the following 100-residue polypeptide: Urease subunit gamma (100 aa).

The protein belongs to the urease gamma subunit family. In terms of assembly, heterotrimer of UreA (gamma), UreB (beta) and UreC (alpha) subunits. Three heterotrimers associate to form the active enzyme.

It localises to the cytoplasm. It carries out the reaction urea + 2 H2O + H(+) = hydrogencarbonate + 2 NH4(+). It functions in the pathway nitrogen metabolism; urea degradation; CO(2) and NH(3) from urea (urease route): step 1/1. This chain is Urease subunit gamma, found in Mycobacterium sp. (strain JLS).